Here is a 254-residue protein sequence, read N- to C-terminus: 2-dehydro-3-deoxy-D-gluconate 5-dehydrogenase (254 aa).

The active-site Proton acceptor is Y159.

Belongs to the short-chain dehydrogenases/reductases (SDR) family.

The catalysed reaction is 2-dehydro-3-deoxy-D-gluconate + NAD(+) = 3-deoxy-D-glycero-2,5-hexodiulosonate + NADH + H(+). In terms of biological role, involved in the degradation of 3,6-anhydro-L-galactose, which is the major monomeric sugar of red macroalgae. Catalyzes the fourth step of the pathway, the reduction of 3-deoxy-D-glycero-2,5-hexodiulosonate (L-DDGal) to 2-dehydro-3-deoxy-D-gluconate (KDG). This is 2-dehydro-3-deoxy-D-gluconate 5-dehydrogenase from Pseudoalteromonas atlantica (strain T6c / ATCC BAA-1087).